We begin with the raw amino-acid sequence, 105 residues long: Heat shock protein HspQ (105 aa).

Positions 77-105 (MRDEHPEQPSMDELARTIRKQLQAPRLRN) are disordered.

Belongs to the HspQ family.

The protein localises to the cytoplasm. In terms of biological role, involved in the degradation of certain denaturated proteins, including DnaA, during heat shock stress. This is Heat shock protein HspQ from Salmonella arizonae (strain ATCC BAA-731 / CDC346-86 / RSK2980).